We begin with the raw amino-acid sequence, 309 residues long: ADP-L-glycero-D-manno-heptose-6-epimerase (309 aa).

NADP(+) contacts are provided by residues 10–11, 31–32, lysine 38, lysine 53, 75–79, and asparagine 92; these read MI, DN, and EGACS. Tyrosine 139 acts as the Proton acceptor in catalysis. Lysine 143 is a binding site for NADP(+). Asparagine 168 is a binding site for substrate. Positions 169 and 177 each coordinate NADP(+). Catalysis depends on lysine 177, which acts as the Proton acceptor. Residues serine 179, histidine 186, 200-203, arginine 208, and tyrosine 271 contribute to the substrate site; that span reads FDGS.

It belongs to the NAD(P)-dependent epimerase/dehydratase family. HldD subfamily. In terms of assembly, homopentamer. Requires NADP(+) as cofactor.

The catalysed reaction is ADP-D-glycero-beta-D-manno-heptose = ADP-L-glycero-beta-D-manno-heptose. Its pathway is nucleotide-sugar biosynthesis; ADP-L-glycero-beta-D-manno-heptose biosynthesis; ADP-L-glycero-beta-D-manno-heptose from D-glycero-beta-D-manno-heptose 7-phosphate: step 4/4. Its function is as follows. Catalyzes the interconversion between ADP-D-glycero-beta-D-manno-heptose and ADP-L-glycero-beta-D-manno-heptose via an epimerization at carbon 6 of the heptose. This Serratia proteamaculans (strain 568) protein is ADP-L-glycero-D-manno-heptose-6-epimerase.